Reading from the N-terminus, the 129-residue chain is Small ribosomal subunit protein uS11 (129 aa).

The protein belongs to the universal ribosomal protein uS11 family. As to quaternary structure, part of the 30S ribosomal subunit. Interacts with proteins S7 and S18. Binds to IF-3.

Located on the platform of the 30S subunit, it bridges several disparate RNA helices of the 16S rRNA. Forms part of the Shine-Dalgarno cleft in the 70S ribosome. The protein is Small ribosomal subunit protein uS11 of Parabacteroides distasonis (strain ATCC 8503 / DSM 20701 / CIP 104284 / JCM 5825 / NCTC 11152).